The chain runs to 880 residues: Leucine--tRNA ligase (880 aa).

A 'HIGH' region motif is present at residues 49–59 (PYPSGRIHMGH). The 'KMSKS' region motif lies at 638 to 642 (KMSKS). ATP is bound at residue K641.

Belongs to the class-I aminoacyl-tRNA synthetase family.

The protein resides in the cytoplasm. It carries out the reaction tRNA(Leu) + L-leucine + ATP = L-leucyl-tRNA(Leu) + AMP + diphosphate. The sequence is that of Leucine--tRNA ligase from Bartonella henselae (strain ATCC 49882 / DSM 28221 / CCUG 30454 / Houston 1) (Rochalimaea henselae).